The primary structure comprises 492 residues: Catalase isozyme 2 (492 aa).

Active-site residues include histidine 65 and asparagine 138. Tyrosine 348 lines the heme pocket.

This sequence belongs to the catalase family. As to quaternary structure, homotetramer. The cofactor is heme.

It localises to the peroxisome. The enzyme catalyses 2 H2O2 = O2 + 2 H2O. Functionally, occurs in almost all aerobically respiring organisms and serves to protect cells from the toxic effects of hydrogen peroxide. This chain is Catalase isozyme 2 (CAT2), found in Solanum lycopersicum (Tomato).